Consider the following 478-residue polypeptide: tRNA (guanine-N(7)-)-methyltransferase non-catalytic subunit TRM82 (478 aa).

WD repeat units follow at residues 14–53 (SSAD…VLDP), 73–113 (EQKF…GLQQ), 217–258 (GHVS…HIIE), and 263–301 (GHEE…LNEK).

The protein belongs to the WD repeat TRM82 family. In terms of assembly, forms a heterodimer with the catalytic subunit TRM8.

Its subcellular location is the nucleus. Its pathway is tRNA modification; N(7)-methylguanine-tRNA biosynthesis. Functionally, required for the formation of N(7)-methylguanine at position 46 (m7G46) in tRNA. In the complex, it is required to stabilize and induce conformational changes of the catalytic subunit. This is tRNA (guanine-N(7)-)-methyltransferase non-catalytic subunit TRM82 from Phaeosphaeria nodorum (strain SN15 / ATCC MYA-4574 / FGSC 10173) (Glume blotch fungus).